We begin with the raw amino-acid sequence, 373 residues long: Securin (373 aa).

Residues 1-10 are compositionally biased toward basic and acidic residues; sequence MMPANEDKEN. A disordered region spans residues 1 to 27; sequence MMPANEDKENNIVYTGNESSGINFPQT. Residues 12–26 show a composition bias toward polar residues; the sequence is IVYTGNESSGINFPQ. A D-box motif is present at residues 85–88; it reads RLPL. The segment at 177 to 278 is disordered; the sequence is ADSGKNEESS…LPYVPEGYSP (102 aa). Residues serine 185, serine 186, serine 212, and serine 213 each carry the phosphoserine modification. Over residues 185–194 the composition is skewed to acidic residues; that stretch reads SSDDDEGNED. Residues 225 to 235 show a composition bias toward low complexity; it reads LFNEQGGLQQL. Over residues 240–256 the composition is skewed to basic and acidic residues; it reads TKNEQKTKNDKSDKTDD. The residue at position 277 (serine 277) is a Phosphoserine. Phosphoserine; by CDC28 is present on serine 292.

The protein belongs to the securin family. As to quaternary structure, interacts with the caspase-like ESP1, and prevents its protease activity probably by covering its active site. Interacts with CDC20. Post-translationally, phosphorylated by CDC28. The phosphorylation may be important for ESP1 localization to the nucleus. In terms of processing, ubiquitinated by the anaphase promoting complex (APC) at the onset of anaphase, conducting to its degradation.

Its subcellular location is the cytoplasm. It localises to the nucleus. Regulatory protein, which plays a central role in chromosome stability. Probably acts by blocking the action of key proteins. During the mitosis, it blocks Separase/ESP1 function, preventing the proteolysis of the cohesin complex and the subsequent segregation of the chromosomes. At the onset of anaphase, it is ubiquitinated, conducting to its destruction and to the liberation of ESP1. This chain is Securin (PDS1), found in Saccharomyces cerevisiae (strain ATCC 204508 / S288c) (Baker's yeast).